The sequence spans 342 residues: MINVGIVGGTGYTGVELLRILAQHPKAKLKVITSRQEAGTGVDDLFSSLRGQITLKFSDPLKVDFGKCDVVFFATPNGIAMQQVSALLGSGIKVIDLSADFRIKDVAEWEEWYGMSHTAPELVAEAVYGLPEVNREKIRNARLIANPGCYPTAVQLGFIPLIEAGAVDENHLIADTKSGVSGAGRKAEIHTLYAEASDNFKSYAVAGHRHLPEIRQGLSERSGKPIDLTFVPHLTPMIRGIHATLYARLTRDVDLQALYESRYANEPFVDVLPAGSHPETRSVRGSNFCRIAVHRPRNGDTAVILSVTDNLVKGAAGQAVQNMNIMYGLPEKMGIQHIPLLP.

The active site involves Cys149.

Belongs to the NAGSA dehydrogenase family. Type 1 subfamily.

The protein localises to the cytoplasm. It catalyses the reaction N-acetyl-L-glutamate 5-semialdehyde + phosphate + NADP(+) = N-acetyl-L-glutamyl 5-phosphate + NADPH + H(+). It functions in the pathway amino-acid biosynthesis; L-arginine biosynthesis; N(2)-acetyl-L-ornithine from L-glutamate: step 3/4. Its function is as follows. Catalyzes the NADPH-dependent reduction of N-acetyl-5-glutamyl phosphate to yield N-acetyl-L-glutamate 5-semialdehyde. This is N-acetyl-gamma-glutamyl-phosphate reductase from Nitrosomonas eutropha (strain DSM 101675 / C91 / Nm57).